Consider the following 509-residue polypeptide: Ribonuclease Y (509 aa).

Residues 5–25 (IIILLSVFCGIFFICFIICSS) traverse the membrane as a helical segment. Positions 199 to 259 (TTNIVKLPSD…IRREIATRTL (61 aa)) constitute a KH domain. In terms of domain architecture, HD spans 325–418 (VLAHSIEVAK…VAIADSISAS (94 aa)).

This sequence belongs to the RNase Y family.

It is found in the cell membrane. Functionally, endoribonuclease that initiates mRNA decay. This is Ribonuclease Y from Mycoplasma mycoides subsp. mycoides SC (strain CCUG 32753 / NCTC 10114 / PG1).